Here is a 491-residue protein sequence, read N- to C-terminus: G2/mitotic-specific cyclin-A (491 aa).

A disordered region spans residues 1-21 (MASFQIHQDMSNKENPGIKIP). One can recognise a Cyclin N-terminal domain in the interval 206–332 (DILEYFRESE…ILKILSFDLC (127 aa)).

The protein belongs to the cyclin family. Cyclin AB subfamily. In terms of assembly, component of the Frs-CycA-Cdk1 complex composed of CycA, Cdk1 and Z600. Interacts (via C-terminus) with Z600. Interacts with otu and (via C-terminus) with bam; the interaction stabilizes CycA by negatively regulating its ubiquitination. In terms of processing, ubiquitinated. Ubiquitination state is negatively regulated by a deubiquitinase complex made up of bam and otu.

Its function is as follows. Essential for the control of the cell cycle at the G2/M (mitosis) transition. Interacts with the Cdk1 and Cdk2 protein kinases to form MPF. G2/M cyclins accumulate steadily during G2 and are abruptly destroyed at mitosis. The polypeptide is G2/mitotic-specific cyclin-A (CycA) (Drosophila melanogaster (Fruit fly)).